The chain runs to 208 residues: Uracil phosphoribosyltransferase (208 aa).

5-phospho-alpha-D-ribose 1-diphosphate is bound by residues Arg-78, Arg-103, and 130-138 (DPMLATGGT). Uracil-binding positions include Ile-193 and 198–200 (GDA). Asp-199 contacts 5-phospho-alpha-D-ribose 1-diphosphate.

This sequence belongs to the UPRTase family. Requires Mg(2+) as cofactor.

The catalysed reaction is UMP + diphosphate = 5-phospho-alpha-D-ribose 1-diphosphate + uracil. The protein operates within pyrimidine metabolism; UMP biosynthesis via salvage pathway; UMP from uracil: step 1/1. Allosterically activated by GTP. Catalyzes the conversion of uracil and 5-phospho-alpha-D-ribose 1-diphosphate (PRPP) to UMP and diphosphate. The polypeptide is Uracil phosphoribosyltransferase (Blochmanniella floridana).